Reading from the N-terminus, the 174-residue chain is Endoribonuclease YbeY (174 aa).

Zn(2+) contacts are provided by H129, H133, and H139.

It belongs to the endoribonuclease YbeY family. The cofactor is Zn(2+).

It is found in the cytoplasm. In terms of biological role, single strand-specific metallo-endoribonuclease involved in late-stage 70S ribosome quality control and in maturation of the 3' terminus of the 16S rRNA. In Lactobacillus helveticus (strain DPC 4571), this protein is Endoribonuclease YbeY.